The primary structure comprises 214 residues: Pyridoxine/pyridoxamine 5'-phosphate oxidase (214 aa).

Substrate is bound by residues 9–12 and Lys67; that span reads RKDY. FMN contacts are provided by residues 62 to 67, 77 to 78, Arg83, Lys84, and Gln106; these read RMVLLK and FT. 3 residues coordinate substrate: Tyr124, Arg128, and Ser132. FMN contacts are provided by residues 141–142 and Trp186; that span reads QS. Residue 192–194 participates in substrate binding; sequence RLH. Arg196 serves as a coordination point for FMN.

Belongs to the pyridoxamine 5'-phosphate oxidase family. Homodimer. FMN is required as a cofactor.

It catalyses the reaction pyridoxamine 5'-phosphate + O2 + H2O = pyridoxal 5'-phosphate + H2O2 + NH4(+). It carries out the reaction pyridoxine 5'-phosphate + O2 = pyridoxal 5'-phosphate + H2O2. Its pathway is cofactor metabolism; pyridoxal 5'-phosphate salvage; pyridoxal 5'-phosphate from pyridoxamine 5'-phosphate: step 1/1. The protein operates within cofactor metabolism; pyridoxal 5'-phosphate salvage; pyridoxal 5'-phosphate from pyridoxine 5'-phosphate: step 1/1. Catalyzes the oxidation of either pyridoxine 5'-phosphate (PNP) or pyridoxamine 5'-phosphate (PMP) into pyridoxal 5'-phosphate (PLP). The sequence is that of Pyridoxine/pyridoxamine 5'-phosphate oxidase from Nostoc punctiforme (strain ATCC 29133 / PCC 73102).